The sequence spans 348 residues: Myricetin O-methyltransferase (348 aa).

Methionine 1 carries the N-acetylmethionine modification. S-adenosyl-L-methionine contacts are provided by glycine 189, aspartate 212, aspartate 232, methionine 233, and lysine 246. Histidine 250 acts as the Proton acceptor in catalysis.

The N-terminus is blocked.

The catalysed reaction is S-adenosyl-L-methionine + a 3'-hydroxyflavonoid = S-adenosyl-L-homocysteine + a 3'-methoxyflavonoid.. The enzyme catalyses S-adenosyl-L-methionine + a 5'-hydroxy-3'-methoxyflavonoid = S-adenosyl-L-homocysteine + a 3',5'-dimethoxyflavonoid.. Functionally, methylates myricetin and dihydromyricetin at 2 sites. Inactive towards 16-hydroxytabersonine, the phenylpropanoids 5-hydroxyferulate, caffeate and their CoA-esters, flavones and flavanones possessing 2 or 3 B-ring hydroxyl groups. In Catharanthus roseus (Madagascar periwinkle), this protein is Myricetin O-methyltransferase.